We begin with the raw amino-acid sequence, 1127 residues long: Structural protein MDM1 (1127 aa).

Positions 85 to 273 (NAQIGKELES…WNLRIVSLSQ (189 aa)) constitute a PXA domain. 3 positions are modified to phosphoserine: S670, S673, and S692. Positions 705–762 (SNNFRDNIASLTISIDQIEKELELLRHLILKADLTNNQMQLKILKKSQRTLLKELEMK) form a coiled coil. One can recognise a PX domain in the interval 782–905 (TKIYIRSYFS…RFLTDPTPFK (124 aa)).

The protein belongs to the sorting nexin family.

Its subcellular location is the cytoplasm. Its function is as follows. Essential for mitotic growth. Mediates organelle inheritance. The polypeptide is Structural protein MDM1 (MDM1) (Saccharomyces cerevisiae (strain ATCC 204508 / S288c) (Baker's yeast)).